Reading from the N-terminus, the 334-residue chain is Ferrochelatase (334 aa).

Residues His207 and Glu288 each contribute to the Fe cation site.

It belongs to the ferrochelatase family.

Its subcellular location is the cytoplasm. It carries out the reaction heme b + 2 H(+) = protoporphyrin IX + Fe(2+). Its pathway is porphyrin-containing compound metabolism; protoheme biosynthesis; protoheme from protoporphyrin-IX: step 1/1. Its function is as follows. Catalyzes the ferrous insertion into protoporphyrin IX. The chain is Ferrochelatase from Helicobacter pylori (strain P12).